The sequence spans 526 residues: Nitrogenase iron-iron protein alpha chain (526 aa).

[8Fe-7S] cluster is bound by residues C49, C75, and C138. Residues C257 and H423 each coordinate [8Fe-9S-C-homocitryl] cluster. A disordered region spans residues 507 to 526 (RNQPMPPSRKLRDAVQPAAE).

The protein belongs to the NifD/NifK/NifE/NifN family. Hexamer of two alpha, two beta, and two delta chains. It depends on [8Fe-7S] cluster as a cofactor. The cofactor is [8Fe-9S-C-homocitryl] cluster.

It carries out the reaction N2 + 8 reduced [2Fe-2S]-[ferredoxin] + 16 ATP + 16 H2O = H2 + 8 oxidized [2Fe-2S]-[ferredoxin] + 2 NH4(+) + 16 ADP + 16 phosphate + 6 H(+). In terms of biological role, this iron-iron protein is part of the nitrogenase complex that catalyzes the key enzymatic reactions in nitrogen fixation. Other nitrogenase complexes utilize a molybdenum-iron protein or a vanadium-iron protein. This is Nitrogenase iron-iron protein alpha chain (anfD) from Rhodobacter capsulatus (Rhodopseudomonas capsulata).